The chain runs to 387 residues: Probable protein phosphatase 2C 25 (387 aa).

Residues 52–351 enclose the PPM-type phosphatase domain; the sequence is EFSFAVVQAN…DDITVVVVYI (300 aa). Mn(2+) is bound by residues Asp-83, Gly-84, Asp-283, and Asp-342.

This sequence belongs to the PP2C family. Requires Mg(2+) as cofactor. It depends on Mn(2+) as a cofactor.

It catalyses the reaction O-phospho-L-seryl-[protein] + H2O = L-seryl-[protein] + phosphate. The catalysed reaction is O-phospho-L-threonyl-[protein] + H2O = L-threonyl-[protein] + phosphate. This chain is Probable protein phosphatase 2C 25, found in Oryza sativa subsp. japonica (Rice).